Here is a 506-residue protein sequence, read N- to C-terminus: Aldehyde dehydrogenase [NAD(P)+] 2 (506 aa).

Glutamate 268 acts as the Proton acceptor in catalysis. The active-site Nucleophile is the cysteine 302.

This sequence belongs to the aldehyde dehydrogenase family.

The protein resides in the cytoplasm. It carries out the reaction an aldehyde + NAD(+) + H2O = a carboxylate + NADH + 2 H(+). The catalysed reaction is 3-aminopropanal + NAD(+) + H2O = beta-alanine + NADH + 2 H(+). Its function is as follows. Cytoplasmic aldehyde dehydrogenase involved in ethanol oxidation. Involved in pantothenic acid production through the conversion of 3-aminopropanal to beta-alanine, an intermediate in pantothenic acid (vitamin B5) and coenzyme A (CoA) biosynthesis. The sequence is that of Aldehyde dehydrogenase [NAD(P)+] 2 (ALD3) from Saccharomyces cerevisiae (strain ATCC 204508 / S288c) (Baker's yeast).